A 39-amino-acid chain; its full sequence is Potassium channel toxin alpha-KTx 2.5 (39 aa).

Disulfide bonds link C7–C29, C13–C34, and C17–C36.

It belongs to the short scorpion toxin superfamily. Potassium channel inhibitor family. Alpha-KTx 02 subfamily. In terms of tissue distribution, expressed by the venom gland.

It is found in the secreted. In terms of biological role, potent selective inhibitor of Kv1.1/KCNA1, Kv1.2/KCNA2, Kv1.3/KCNA3 voltage-gated potassium channels. Weak inhibitor of Kv1.6/KCNA6 potassium channel. It also shows a weak interaction with nicotinic acetylcholine receptors (nAChR), suggesting it may weakly inhibit it. This Centruroides limbatus (Bark scorpion) protein is Potassium channel toxin alpha-KTx 2.5.